The sequence spans 450 residues: MLPTIALIGRPNVGKSTLFNRLLRKKRAITHDMPGITRDRIYAEGNYNGVHYALIDTGGLVMESDNNSEEFQGDIFEQAREAIEEAQALILVVDGRTGITQLDEQVAAYIRQSNKPILLLVNKVDGSELEATATADFHALGFEMMAVSAEHGFNLLELREKVADMALATGIEYEEEDEEAKGLKIAMLGRPNAGKSSMVNALTGEERVIVSDVAGTTRDSVDVTFESGGKIYTFVDTAGVRRRTNITDTIERFSVVRALRSSTKADITVMVVDALAGITKQDKRLLEYLLREAVPFIIAVNKIDLVSKSERNLLREGFERALRMAHHVPVVYTSCISKSGLGGILPLASKLKAECSLRISTGQLNRIMKEIIEKHQPPVVKRRRAKFKYMTQADDEPPTFIFFINDEKLIKSSYHRFLENRLRKILNVKHAPLNIVFRSTFRAKEDIVHK.

EngA-type G domains are found at residues 3–170 and 183–356; these read PTIA…LATG and LKIA…AECS. Residues 9 to 16, 56 to 60, 122 to 125, 189 to 196, 236 to 240, and 301 to 304 contribute to the GTP site; these read GRPNVGKS, DTGGL, NKVD, GRPNAGKS, DTAGV, and NKID. Residues 357-441 form the KH-like domain; the sequence is LRISTGQLNR…PLNIVFRSTF (85 aa).

Belongs to the TRAFAC class TrmE-Era-EngA-EngB-Septin-like GTPase superfamily. EngA (Der) GTPase family. Associates with the 50S ribosomal subunit.

Its function is as follows. GTPase that plays an essential role in the late steps of ribosome biogenesis. The chain is GTPase Der from Maridesulfovibrio salexigens (strain ATCC 14822 / DSM 2638 / NCIMB 8403 / VKM B-1763) (Desulfovibrio salexigens).